The following is a 426-amino-acid chain: Transcription factor bHLH60 (426 aa).

2 stretches are compositionally biased toward polar residues: residues 117–137 and 148–172; these read QNGN…SSAN and TDSS…QNNR. The segment at 117-201 is disordered; sequence QNGNISGETP…SSEENEKLPY (85 aa). Residues 191–200 show a composition bias toward basic and acidic residues; sequence KSSEENEKLP. The bHLH domain maps to 210–307; sequence QATDSHSLAE…DEIINHVQSL (98 aa). A disordered region spans residues 367–398; it reads HRQLQQPPTQQWPFDGLNQPVWGREEDQAHGN.

As to quaternary structure, homodimer. In terms of tissue distribution, expressed constitutively in roots, leaves, stems, and flowers.

The protein resides in the nucleus. The chain is Transcription factor bHLH60 (BHLH60) from Arabidopsis thaliana (Mouse-ear cress).